Consider the following 350-residue polypeptide: S-adenosylmethionine:tRNA ribosyltransferase-isomerase (350 aa).

The protein belongs to the QueA family. As to quaternary structure, monomer.

Its subcellular location is the cytoplasm. The enzyme catalyses 7-aminomethyl-7-carbaguanosine(34) in tRNA + S-adenosyl-L-methionine = epoxyqueuosine(34) in tRNA + adenine + L-methionine + 2 H(+). It participates in tRNA modification; tRNA-queuosine biosynthesis. In terms of biological role, transfers and isomerizes the ribose moiety from AdoMet to the 7-aminomethyl group of 7-deazaguanine (preQ1-tRNA) to give epoxyqueuosine (oQ-tRNA). This chain is S-adenosylmethionine:tRNA ribosyltransferase-isomerase, found in Bacillus cereus (strain 03BB102).